The primary structure comprises 384 residues: Galactokinase (384 aa).

Residue E34 to D37 coordinates substrate. S123–S129 serves as a coordination point for ATP. Mg(2+) is bound by residues S129 and E161. D173 acts as the Proton acceptor in catalysis. Substrate is bound at residue Y222.

The protein belongs to the GHMP kinase family. GalK subfamily.

The protein localises to the cytoplasm. The catalysed reaction is alpha-D-galactose + ATP = alpha-D-galactose 1-phosphate + ADP + H(+). It participates in carbohydrate metabolism; galactose metabolism. Its function is as follows. Catalyzes the transfer of the gamma-phosphate of ATP to D-galactose to form alpha-D-galactose-1-phosphate (Gal-1-P). The polypeptide is Galactokinase (Actinobacillus pleuropneumoniae serotype 3 (strain JL03)).